Consider the following 294-residue polypeptide: UPF0761 membrane protein YPK_4186 (294 aa).

7 helical membrane-spanning segments follow: residues 44–64 (LLSL…FPMF), 67–87 (ISIK…GDII), 108–128 (GLIV…NIIW), 136–156 (LVFS…LVGA), 185–205 (VFPL…VPTV), 212–232 (ALIG…GFAM), and 246–266 (VLAV…IVLL).

It belongs to the UPF0761 family.

It localises to the cell inner membrane. This Yersinia pseudotuberculosis serotype O:3 (strain YPIII) protein is UPF0761 membrane protein YPK_4186.